The chain runs to 521 residues: Anthranilate synthase component 1 (521 aa).

Residues Thr-40 and 292–294 (PYM) contribute to the L-tryptophan site. Position 329–330 (329–330 (GT)) interacts with chorismate. Glu-362 is a binding site for Mg(2+). Residues Tyr-450, Arg-470, 484-486 (GAG), and Gly-486 contribute to the chorismate site. Glu-499 is a Mg(2+) binding site.

The protein belongs to the anthranilate synthase component I family. Heterotetramer consisting of two non-identical subunits: a beta subunit (TrpG) and a large alpha subunit (TrpE). Requires Mg(2+) as cofactor.

It carries out the reaction chorismate + L-glutamine = anthranilate + pyruvate + L-glutamate + H(+). Its pathway is amino-acid biosynthesis; L-tryptophan biosynthesis; L-tryptophan from chorismate: step 1/5. Its activity is regulated as follows. Feedback inhibited by tryptophan. Its function is as follows. Part of a heterotetrameric complex that catalyzes the two-step biosynthesis of anthranilate, an intermediate in the biosynthesis of L-tryptophan. In the first step, the glutamine-binding beta subunit (TrpG) of anthranilate synthase (AS) provides the glutamine amidotransferase activity which generates ammonia as a substrate that, along with chorismate, is used in the second step, catalyzed by the large alpha subunit of AS (TrpE) to produce anthranilate. In the absence of TrpG, TrpE can synthesize anthranilate directly from chorismate and high concentrations of ammonia. This chain is Anthranilate synthase component 1 (trpE), found in Buchnera aphidicola subsp. Acyrthosiphon pisum (strain APS) (Acyrthosiphon pisum symbiotic bacterium).